A 508-amino-acid chain; its full sequence is Photosystem II CP47 reaction center protein (508 aa).

6 helical membrane passes run 21–36, 101–115, 140–156, 203–218, 237–252, and 457–472; these read SVHI…WAGS, IVFS…IWHW, GIHL…FGAF, IAAG…FHLS, VLSS…AFVV, and SFAL…HGAR.

It belongs to the PsbB/PsbC family. PsbB subfamily. In terms of assembly, PSII is composed of 1 copy each of membrane proteins PsbA, PsbB, PsbC, PsbD, PsbE, PsbF, PsbH, PsbI, PsbJ, PsbK, PsbL, PsbM, PsbT, PsbX, PsbY, PsbZ, Psb30/Ycf12, at least 3 peripheral proteins of the oxygen-evolving complex and a large number of cofactors. It forms dimeric complexes. It depends on Binds multiple chlorophylls. PSII binds additional chlorophylls, carotenoids and specific lipids. as a cofactor.

The protein localises to the plastid. It is found in the chloroplast thylakoid membrane. Its function is as follows. One of the components of the core complex of photosystem II (PSII). It binds chlorophyll and helps catalyze the primary light-induced photochemical processes of PSII. PSII is a light-driven water:plastoquinone oxidoreductase, using light energy to abstract electrons from H(2)O, generating O(2) and a proton gradient subsequently used for ATP formation. This chain is Photosystem II CP47 reaction center protein, found in Lactuca sativa (Garden lettuce).